We begin with the raw amino-acid sequence, 336 residues long: MAVIYYDKDANLDLIKDKKIAIIGFGSQGHAHALNLKDSGLNVIVGLREGSKSWKKAEEQGLTVKTIEEAAKEADIIMILIPDEHQPEVYKKYIEKHLTEGKMLMFAHGFNVHYHQIIPPKNVDVTMIAPKSPGHIVRREYVEGRGVPALVAVYQDYTGKAKEIALAYAKGIGVTRAGVIETTFKEETETDLFGEQAVLCGGVTALIKAGFETLVEAGYQPEIAYFECLNELKLIVDLIYEGGLSFMRYSVSNTAEYGDYISQEKIVTREVRENMKQMLKDIQTGKFAKDWILENQAGRPFFYTMRKKESEHLIEKVGKELRKMMPWLKERNVDEE.

One can recognise a KARI N-terminal Rossmann domain in the interval 1 to 182 (MAVIYYDKDA…GVTRAGVIET (182 aa)). Residues 25–28 (FGSQ), Arg48, Ser51, Ser53, and 83–86 (DEHQ) each bind NADP(+). His108 is a catalytic residue. An NADP(+)-binding site is contributed by Gly134. Positions 183–328 (TFKEETETDL…KELRKMMPWL (146 aa)) constitute a KARI C-terminal knotted domain. Residues Asp191, Glu195, Glu227, and Glu231 each coordinate Mg(2+). Ser252 serves as a coordination point for substrate.

This sequence belongs to the ketol-acid reductoisomerase family. Mg(2+) is required as a cofactor.

It catalyses the reaction (2R)-2,3-dihydroxy-3-methylbutanoate + NADP(+) = (2S)-2-acetolactate + NADPH + H(+). The catalysed reaction is (2R,3R)-2,3-dihydroxy-3-methylpentanoate + NADP(+) = (S)-2-ethyl-2-hydroxy-3-oxobutanoate + NADPH + H(+). The protein operates within amino-acid biosynthesis; L-isoleucine biosynthesis; L-isoleucine from 2-oxobutanoate: step 2/4. It participates in amino-acid biosynthesis; L-valine biosynthesis; L-valine from pyruvate: step 2/4. Functionally, involved in the biosynthesis of branched-chain amino acids (BCAA). Catalyzes an alkyl-migration followed by a ketol-acid reduction of (S)-2-acetolactate (S2AL) to yield (R)-2,3-dihydroxy-isovalerate. In the isomerase reaction, S2AL is rearranged via a Mg-dependent methyl migration to produce 3-hydroxy-3-methyl-2-ketobutyrate (HMKB). In the reductase reaction, this 2-ketoacid undergoes a metal-dependent reduction by NADPH to yield (R)-2,3-dihydroxy-isovalerate. The chain is Ketol-acid reductoisomerase (NADP(+)) from Thermotoga neapolitana (strain ATCC 49049 / DSM 4359 / NBRC 107923 / NS-E).